The primary structure comprises 108 residues: uncharacterized protein (108 aa).

This is an uncharacterized protein from Methanocaldococcus jannaschii (strain ATCC 43067 / DSM 2661 / JAL-1 / JCM 10045 / NBRC 100440) (Methanococcus jannaschii).